The primary structure comprises 514 residues: Extracellular exo-inulinase (514 aa).

The N-terminal stretch at 1-18 (MRAFLALIFLTFVMNVES) is a signal peptide. Residues 33-34 (ND) and Gln52 contribute to the substrate site. Asp34 acts as the Nucleophile in catalysis. The N-linked (GlcNAc...) asparagine glycan is linked to Asn56. 2 residues coordinate substrate: Trp60 and Ser95. 2 N-linked (GlcNAc...) asparagine glycosylation sites follow: Asn104 and Asn110. Residue 162 to 163 (RD) participates in substrate binding. 2 N-linked (GlcNAc...) asparagine glycosylation sites follow: Asn197 and Asn203. 2 residues coordinate substrate: Glu214 and Trp300. The active-site Proton donor/acceptor is the Glu214. N-linked (GlcNAc...) asparagine glycosylation is found at Asn357, Asn371, Asn389, and Asn422.

It belongs to the glycosyl hydrolase 32 family.

The protein resides in the secreted. It catalyses the reaction Hydrolysis of terminal, non-reducing (2-&gt;1)- and (2-&gt;6)-linked beta-D-fructofuranose residues in fructans.. Functionally, exo-inulinase involved in utilization of the plant storage polymer inulin, consisting of fructooligosaccharides with a degree of polymerization (DP) value from 2 to 60. Splits off terminal fructose units successively from the non-reducing end of the inulin molecule. The chain is Extracellular exo-inulinase from Meyerozyma guilliermondii (strain ATCC 6260 / CBS 566 / DSM 6381 / JCM 1539 / NBRC 10279 / NRRL Y-324) (Yeast).